Consider the following 459-residue polypeptide: Siroheme synthase (459 aa).

The precorrin-2 dehydrogenase /sirohydrochlorin ferrochelatase stretch occupies residues 1–204; sequence MDHLPIFCQL…ADEKAVNATT (204 aa). NAD(+) contacts are provided by residues 22–23 and 43–44; these read DV and LT. A Phosphoserine modification is found at Ser128. Residues 216–459 are uroporphyrinogen-III C-methyltransferase; that stretch reads GEVVLVGAGP…KLNWFSNYYD (244 aa). Residue Pro225 coordinates S-adenosyl-L-methionine. The active-site Proton acceptor is Asp248. Lys270 serves as the catalytic Proton donor. S-adenosyl-L-methionine-binding positions include 301 to 303, Ile306, 331 to 332, Met382, and Gly411; these read GGD and TA.

In the N-terminal section; belongs to the precorrin-2 dehydrogenase / sirohydrochlorin ferrochelatase family. This sequence in the C-terminal section; belongs to the precorrin methyltransferase family.

The enzyme catalyses uroporphyrinogen III + 2 S-adenosyl-L-methionine = precorrin-2 + 2 S-adenosyl-L-homocysteine + H(+). The catalysed reaction is precorrin-2 + NAD(+) = sirohydrochlorin + NADH + 2 H(+). It carries out the reaction siroheme + 2 H(+) = sirohydrochlorin + Fe(2+). The protein operates within cofactor biosynthesis; adenosylcobalamin biosynthesis; precorrin-2 from uroporphyrinogen III: step 1/1. It participates in cofactor biosynthesis; adenosylcobalamin biosynthesis; sirohydrochlorin from precorrin-2: step 1/1. It functions in the pathway porphyrin-containing compound metabolism; siroheme biosynthesis; precorrin-2 from uroporphyrinogen III: step 1/1. Its pathway is porphyrin-containing compound metabolism; siroheme biosynthesis; siroheme from sirohydrochlorin: step 1/1. The protein operates within porphyrin-containing compound metabolism; siroheme biosynthesis; sirohydrochlorin from precorrin-2: step 1/1. Its function is as follows. Multifunctional enzyme that catalyzes the SAM-dependent methylations of uroporphyrinogen III at position C-2 and C-7 to form precorrin-2 via precorrin-1. Then it catalyzes the NAD-dependent ring dehydrogenation of precorrin-2 to yield sirohydrochlorin. Finally, it catalyzes the ferrochelation of sirohydrochlorin to yield siroheme. The sequence is that of Siroheme synthase from Salmonella agona (strain SL483).